The chain runs to 362 residues: MSTSKRKIEHLELCAKRPVESRNVTSGFDDVMLIHKALPQIHMDEIDLSTDFLGKSLKAPFLIASITGGHPDTTPVNAALAEAAEELGVGIGVGSQRAAIEDPEQESSFSVVRDKAPNAFVYGNVGAAQIKEYGIEAIEKLVDMLDADALAVHLNFLQEAIQPEGDRDATGVLEMIKEVCSLNVPIIAKETGAGISKEDAALLKEAGVSAIDVGGVGGTSWSGVEVYRAHDSGDAISEDLGNLYWDFGIPTVSSVLECRSFVPVVATGGVRTGLDIAKSLSLGAYAASAALPFVGPALIGADEVVSSLSKMLNELRVAMFLCGCGNINELRTSSKVTVTGWTKEYITQRGFDPKDLDIRSDL.

Residue 6-7 (RK) participates in substrate binding. Residues 65-67 (SIT), Ser95, and Asn124 contribute to the FMN site. 95–97 (SQR) serves as a coordination point for substrate. Position 158 (Gln158) interacts with substrate. Glu159 is a Mg(2+) binding site. FMN-binding positions include Lys189, Thr219, 269–271 (GVR), and 290–291 (AL).

The protein belongs to the IPP isomerase type 2 family. Homooctamer. Dimer of tetramers. Requires FMN as cofactor. NADPH is required as a cofactor. It depends on Mg(2+) as a cofactor.

Its subcellular location is the cytoplasm. It carries out the reaction isopentenyl diphosphate = dimethylallyl diphosphate. Functionally, involved in the biosynthesis of isoprenoids. Catalyzes the 1,3-allylic rearrangement of the homoallylic substrate isopentenyl (IPP) to its allylic isomer, dimethylallyl diphosphate (DMAPP). The chain is Isopentenyl-diphosphate delta-isomerase from Methanococcoides burtonii (strain DSM 6242 / NBRC 107633 / OCM 468 / ACE-M).